Consider the following 383-residue polypeptide: Large ribosomal subunit protein uL2m (383 aa).

Disordered stretches follow at residues 97–122 (FPKK…GGGH) and 322–357 (MNAN…YKTR). Basic residues-rich tracts occupy residues 106 to 122 (GRNH…GGGH) and 330 to 340 (GGGRGKSKGNR).

Belongs to the universal ribosomal protein uL2 family. In terms of assembly, component of the mitochondrial large ribosomal subunit (mt-LSU). Mature N.crassa 74S mitochondrial ribosomes consist of a small (37S) and a large (54S) subunit. The 37S small subunit contains a 16S ribosomal RNA (16S mt-rRNA) and 32 different proteins. The 54S large subunit contains a 23S rRNA (23S mt-rRNA) and 42 different proteins.

The protein resides in the mitochondrion. Component of the mitochondrial ribosome (mitoribosome), a dedicated translation machinery responsible for the synthesis of mitochondrial genome-encoded proteins, including at least some of the essential transmembrane subunits of the mitochondrial respiratory chain. The mitoribosomes are attached to the mitochondrial inner membrane and translation products are cotranslationally integrated into the membrane. The protein is Large ribosomal subunit protein uL2m (rml2) of Neurospora crassa (strain ATCC 24698 / 74-OR23-1A / CBS 708.71 / DSM 1257 / FGSC 987).